Consider the following 649-residue polypeptide: Quinol oxidase subunit 1 (649 aa).

Residues 1-15 (MKFKWDEFFVTGDPL) lie on the Extracellular side of the membrane. A helical membrane pass occupies residues 16–34 (ILGAQVSIALSTIAIIFVL). Residues 35-56 (TYFKKWKWLWSEWITTVDHKKL) are Cytoplasmic-facing. A helical membrane pass occupies residues 57–75 (GIMYIISAVIMLFRGGVDG). Residues 76–97 (LMMRAQLALPNNSFLDSNHYNE) are Extracellular-facing. A helical membrane pass occupies residues 98-117 (IFTTHGTIMIIFMAMPFLIG). Residue His102 participates in Fe(II)-heme a binding. Topologically, residues 118 to 139 (LINVVVPLQIGARDVAFPYLNN) are cytoplasmic. The helical transmembrane segment at 140-157 (LSFWTFFVGAMLFNISFV) threads the bilayer. At 158–190 (IGGSPNAGWTSYMPLASNDMSPGPGENYYLLGL) the chain is on the extracellular side. The chain crosses the membrane as a helical span at residues 191–209 (QIAGIGTLMTGINFMVTIL). Topologically, residues 210–227 (KMRTKGMTLMRMPMFTWT) are cytoplasmic. The chain crosses the membrane as a helical span at residues 228–246 (TLITMVIIVFAFPVLTVAL). Topologically, residues 247–272 (ALLSFDRLFGAHFFTLEAGGMPMLWA) are extracellular. The helical transmembrane segment at 273–292 (NLFWIWGHPEVYIVILPAFG) threads the bilayer. Residues His280 and Tyr284 each coordinate Cu cation. The 1'-histidyl-3'-tyrosine (His-Tyr) cross-link spans 280–284 (HPEVY). At 293–315 (IFSEIISSFARKQLFGYKAMVGS) the chain is on the cytoplasmic side. Residues 316-335 (IIAISVLSFLVWTHHFFTMG) form a helical membrane-spanning segment. The Cu cation site is built by His329 and His330. The Extracellular portion of the chain corresponds to 336–343 (NSASVNSF). The helical transmembrane segment at 344–362 (FSITTMAISIPTGVKIFNW) threads the bilayer. The Cytoplasmic segment spans residues 363-377 (LFTMYKGRISFTTPM). A helical transmembrane segment spans residues 378 to 397 (LWALAFIPNFVIGGVTGVML). The Extracellular segment spans residues 398–405 (AMAAADYQ). A helical transmembrane segment spans residues 406–425 (YHNTYFLVSHFHYVLIAGTV). Heme a3 is bound at residue His415. His417 is a Fe(II)-heme a binding site. At 426–452 (FACFAGFIFWYPKMFGHKLNERIGKWF) the chain is on the cytoplasmic side. Residues 453-472 (FWIFMIGFNICFFPQYFLGL) form a helical membrane-spanning segment. Residues 473–490 (QGMPRRIYTYGPNDGWTT) are Extracellular-facing. A helical membrane pass occupies residues 491–510 (LNFISTVGAFMMGVGFLILC). Topologically, residues 511–584 (YNIYYSFRYS…SKFKKIHMPS (74 aa)) are cytoplasmic. The helical transmembrane segment at 585-604 (NSGRPFFMSVAFGLAGFGLV) threads the bilayer. Residues 605–610 (FEWYWM) are Extracellular-facing. A helical transmembrane segment spans residues 611-631 (GVVGLIGVLLCMVLRSFEYDN). Topologically, residues 632-649 (GYYISVDEIKETERKISE) are cytoplasmic.

It belongs to the heme-copper respiratory oxidase family. It depends on Cu cation as a cofactor. The cofactor is ferriheme a. Heme A3. is required as a cofactor.

It localises to the cell membrane. The enzyme catalyses 2 a quinol + O2 = 2 a quinone + 2 H2O. It participates in energy metabolism; oxidative phosphorylation. Its function is as follows. Catalyzes quinol oxidation with the concomitant reduction of oxygen to water. Major component for energy conversion during vegetative growth. The protein is Quinol oxidase subunit 1 (qoxB) of Bacillus subtilis (strain 168).